Consider the following 622-residue polypeptide: 3-(3-hydroxy-phenyl)propionate/3-hydroxycinnamic acid hydroxylase (622 aa).

Residues 20–49 and 288–298 contribute to the FAD site; these read DVAI…VLEK and FRVDRVLLAGD.

Belongs to the PheA/TfdB FAD monooxygenase family. Requires FAD as cofactor.

It carries out the reaction 3-(3-hydroxyphenyl)propanoate + NADH + O2 + H(+) = 3-(2,3-dihydroxyphenyl)propanoate + NAD(+) + H2O. The enzyme catalyses (2E)-3-(3-hydroxyphenyl)prop-2-enoate + NADH + O2 + H(+) = (2E)-3-(2,3-dihydroxyphenyl)prop-2-enoate + NAD(+) + H2O. Its pathway is aromatic compound metabolism; 3-phenylpropanoate degradation. Catalyzes the insertion of one atom of molecular oxygen into position 2 of the phenyl ring of 3-(3-hydroxyphenyl)propionate (3-HPP) and hydroxycinnamic acid (3HCI). This chain is 3-(3-hydroxy-phenyl)propionate/3-hydroxycinnamic acid hydroxylase, found in Paraburkholderia xenovorans (strain LB400).